The primary structure comprises 388 residues: Protein TsgA homolog (388 aa).

A run of 12 helical transmembrane segments spans residues 11–31 (WISF…GMIM), 50–70 (TFLN…IEII), 77–97 (IFSF…NSIF), 101–121 (INMF…TFII), 133–153 (LLLL…IVTA), 160–180 (IIWY…FLLT), 206–226 (VFLL…FISW), 244–264 (SLVS…SFII), 268–288 (NLYR…YCFI), 298–318 (YIII…ITLA), 332–352 (LILL…SPIV), and 360–380 (TLIS…LIYF).

It belongs to the major facilitator superfamily. TsgA family.

The protein localises to the cell membrane. This chain is Protein TsgA homolog, found in Buchnera aphidicola subsp. Acyrthosiphon pisum (strain Tuc7).